The following is a 541-amino-acid chain: Sorting nexin-27 (541 aa).

Residues 1–26 (MADEDGEGIHPAAPHRNGGGGGGGGS) form a disordered region. Positions 17–26 (NGGGGGGGGS) are enriched in gly residues. The PDZ domain maps to 43 to 136 (VVRIVKSESG…ELILTVLSVP (94 aa)). 2 positions are modified to phosphoserine: Ser51 and Ser62. Positions 161-269 (QAVPISVPTY…EFLSESDENY (109 aa)) constitute a PX domain. A Ras-associating domain is found at 273–362 (SDVELRVALP…TCLTIRKWLF (90 aa)). The interval 273-362 (SDVELRVALP…TCLTIRKWLF (90 aa)) is FERM-like region F1. The FERM-like region F2 stretch occupies residues 373–421 (NDLAVTYFFHQAVDDVKKGYIKAEEKSYQLQKLYEQRKMVMYLNMLRTC). Positions 425 to 525 (NEIIFPHCAC…RVFCELKWRK (101 aa)) are FERM-like region F3.

As to quaternary structure, core component of the SNX27-retromer, a multiprotein complex composed of SNX27, the WASH complex and the retromer complex. Interacts (via PDZ domain) with a number of target transmembrane proteins (via PDZ-binding motif): ABCC4, ADRB2, ARHGEF7, GRIA1, GRIA2, GRIN1, GRIN2A GRIN2C, KCNJ6, KCNJ9 and SLC2A1/GLUT1. Interacts (via the FERM-like regions) with the WASH complex. Interacts with SNX1. Interacts with CYTIP. Interacts with DGKZ. Interacts with MCC. Interacts (via PDZ domains) with SLC9A3; directs SLC9A3 membrane insertion from early endosomes to the plasma membrane.

The protein localises to the early endosome membrane. It is found in the cytoplasm. The protein resides in the cytosol. Involved in the retrograde transport from endosome to plasma membrane, a trafficking pathway that promotes the recycling of internalized transmembrane proteins. Following internalization, endocytosed transmembrane proteins are delivered to early endosomes and recycled to the plasma membrane instead of being degraded in lysosomes. SNX27 specifically binds and directs sorting of a subset of transmembrane proteins containing a PDZ-binding motif at the C-terminus: following interaction with target transmembrane proteins, associates with the retromer complex, preventing entry into the lysosomal pathway, and promotes retromer-tubule based plasma membrane recycling. SNX27 also binds with the WASH complex. Interacts with membranes containing phosphatidylinositol-3-phosphate (PtdIns(3P)). May participate in establishment of natural killer cell polarity. Recruits CYTIP to early endosomes. The chain is Sorting nexin-27 (SNX27) from Bos taurus (Bovine).